The primary structure comprises 450 residues: Tubulin alpha-3C chain (450 aa).

The MREC motif motif lies at Met1 to Cys4. Residue Gln11 participates in GTP binding. Lys40 carries the post-translational modification N6-acetyllysine. GTP-binding residues include Glu71, Ser140, Gly144, Thr145, Thr179, Asn206, and Asn228. Glu71 provides a ligand contact to Mg(2+). Glu254 is a catalytic residue. Residue Tyr282 is modified to 3'-nitrotyrosine. Ser439 carries the post-translational modification Phosphoserine. Tyr450 bears the 3'-nitrotyrosine mark.

Belongs to the tubulin family. Dimer of alpha and beta chains. A typical microtubule is a hollow water-filled tube with an outer diameter of 25 nm and an inner diameter of 15 nM. Alpha-beta heterodimers associate head-to-tail to form protofilaments running lengthwise along the microtubule wall with the beta-tubulin subunit facing the microtubule plus end conferring a structural polarity. Microtubules usually have 13 protofilaments but different protofilament numbers can be found in some organisms and specialized cells. It depends on Mg(2+) as a cofactor. Some glutamate residues at the C-terminus are polyglutamylated, resulting in polyglutamate chains on the gamma-carboxyl group. Polyglutamylation plays a key role in microtubule severing by spastin (SPAST). SPAST preferentially recognizes and acts on microtubules decorated with short polyglutamate tails: severing activity by SPAST increases as the number of glutamates per tubulin rises from one to eight, but decreases beyond this glutamylation threshold. Glutamylation is also involved in cilia motility. In terms of processing, some glutamate residues at the C-terminus are monoglycylated but not polyglycylated due to the absence of functional TTLL10 in human. Monoglycylation is mainly limited to tubulin incorporated into cilia and flagella axonemes, which is required for their stability and maintenance. Flagella glycylation controls sperm motility. Both polyglutamylation and monoglycylation can coexist on the same protein on adjacent residues, and lowering glycylation levels increases polyglutamylation, and reciprocally. Post-translationally, acetylation of alpha chains at Lys-40 is located inside the microtubule lumen. This modification has been correlated with increased microtubule stability, intracellular transport and ciliary assembly. Methylation of alpha chains at Lys-40 is found in mitotic microtubules and is required for normal mitosis and cytokinesis contributing to genomic stability. In terms of processing, nitration of Tyr-450 is irreversible and interferes with normal dynein intracellular distribution. Post-translationally, undergoes a tyrosination/detyrosination cycle, the cyclic removal and re-addition of a C-terminal tyrosine residue by the enzymes tubulin tyrosine carboxypeptidase (MATCAP1/KIAA0895L, VASH1 or VASH2) and tubulin tyrosine ligase (TTL), respectively. Tyrosination promotes microtubule interaction with CAP-Gly domain-containing proteins such as CLIP1, CLIP2 and DCTN1. Tyrosination regulates the initiation of dynein-dynactin motility via interaction with DCTN1, which brings the dynein-dynactin complex into contact with microtubules. In neurons, tyrosinated tubulins mediate the initiation of retrograde vesicle transport. In terms of processing, detyrosination is involved in metaphase plate congression by guiding chromosomes during mitosis: detyrosination promotes interaction with CENPE, promoting pole-proximal transport of chromosomes toward the equator. Detyrosination increases microtubules-dependent mechanotransduction in dystrophic cardiac and skeletal muscle. In cardiomyocytes, detyrosinated microtubules are required to resist to contractile compression during contraction: detyrosination promotes association with desmin (DES) at force-generating sarcomeres, leading to buckled microtubules and mechanical resistance to contraction. Expressed in testis.

It localises to the cytoplasm. Its subcellular location is the cytoskeleton. It carries out the reaction GTP + H2O = GDP + phosphate + H(+). Tubulin is the major constituent of microtubules, a cylinder consisting of laterally associated linear protofilaments composed of alpha- and beta-tubulin heterodimers. Microtubules grow by the addition of GTP-tubulin dimers to the microtubule end, where a stabilizing cap forms. Below the cap, tubulin dimers are in GDP-bound state, owing to GTPase activity of alpha-tubulin. The sequence is that of Tubulin alpha-3C chain (TUBA3C) from Homo sapiens (Human).